The following is a 720-amino-acid chain: ABC transporter G family member STR2 (720 aa).

The Cytoplasmic segment spans residues 1 to 467; sequence MRHANGRRGD…NFINIRRTPE (467 aa). In terms of domain architecture, ABC transporter spans 25–274; it reads LEFSNLTYTV…LGRMGRKVPK (250 aa). 70-77 contacts ATP; that stretch reads GPSGAGKS. The disordered stretch occupies residues 313-346; that stretch reads GAHEMSIVPPSPAPSHREGRGHDRSNKRLHLKDQ. Basic and acidic residues predominate over residues 327-346; sequence SHREGRGHDRSNKRLHLKDQ. The helical transmembrane segment at 468 to 488 threads the bilayer; it reads LFLSRLVVLTVMGIMMATMFM. Residues 489-502 are Extracellular-facing; the sequence is HPKKNLQGITNRLS. A helical membrane pass occupies residues 503–523; it reads FFIFTVCLFFFSSNDAVPAFI. At 524–547 the chain is on the cytoplasmic side; it reads QERFIFVRETSHNKYRASSYTIAG. Residues 548–568 traverse the membrane as a helical segment; sequence LITYLPFLAVQAAVYAVIVWF. Topologically, residues 569 to 575 are extracellular; the sequence is ALSLRGP. A helical membrane pass occupies residues 576 to 596; the sequence is FIYFLIVLYMSLLSTNSFVVF. The Cytoplasmic portion of the chain corresponds to 597 to 604; that stretch reads VSSVVPNY. Residues 605–625 traverse the membrane as a helical segment; it reads ILGYAAVIAFTALFFLFCGYF. Topologically, residues 626 to 693 are extracellular; it reads LNSHDMPQYW…QVESKKWEKV (68 aa). N681 is a glycosylation site (N-linked (GlcNAc...) asparagine). The helical transmembrane segment at 694-714 threads the bilayer; sequence YIMLAWAIVYRILFYIVLRFF. Over 715–720 the chain is Cytoplasmic; the sequence is SKNQRT.

Belongs to the ABC transporter superfamily. ABCG family. Stunted arbuscule (STR) subfamily. As to quaternary structure, heterodimerizes with STR; the resulting transporter is located in the peri-arbuscular membrane.

Its subcellular location is the cell membrane. Functionally, together with STR, required for arbuscule development in arbuscular mycorrhizal (AM) symbiosis. The sequence is that of ABC transporter G family member STR2 from Petunia hybrida (Petunia).